A 144-amino-acid chain; its full sequence is Necrosis-inducing secreted protein 1 (144 aa).

The N-terminal stretch at 1–19 (MQFRASIAAAAGLFALANA) is a signal peptide. N-linked (GlcNAc...) asparagine glycans are attached at residues N88, N126, and N133. The interval 103 to 132 (QYVVAAGLYSLYGASSSPTLSHYNVTVTVG) is BAK1/SERK3-binding.

It belongs to the NIS1 effector family.

It is found in the secreted. Its subcellular location is the host cytoplasm. Its function is as follows. Secreted effector that induces necrotic lesions in Nicotiana benthamiana. Interacts with the host receptor-like kinases (RLKs) BAK1/SERK3 and BKK1/SERK4, inhibits their kinase activity and suppresses INF1-induced pathogen-associated molecular pattern (PAMP)-triggered immunity (PTI) in N.benthamiana. Also interacts with the host receptor-like cytoplasmic kinase (RLCK) BIK1 and inhibits its kinase activity, thereby inhibiting PAMP-induced ROS generation. In PTI, phosphorylation relaying by RLKs and RLCKs is critical for the initiation of downstream signaling. The protein is Necrosis-inducing secreted protein 1 of Colletotrichum higginsianum (strain IMI 349063) (Crucifer anthracnose fungus).